The sequence spans 294 residues: 33 kDa chaperonin (294 aa).

Disulfide bonds link C238–C240 and C271–C274.

It belongs to the HSP33 family. In terms of processing, under oxidizing conditions two disulfide bonds are formed involving the reactive cysteines. Under reducing conditions zinc is bound to the reactive cysteines and the protein is inactive.

Its subcellular location is the cytoplasm. Its function is as follows. Redox regulated molecular chaperone. Protects both thermally unfolding and oxidatively damaged proteins from irreversible aggregation. Plays an important role in the bacterial defense system toward oxidative stress. The polypeptide is 33 kDa chaperonin (Staphylococcus haemolyticus (strain JCSC1435)).